The primary structure comprises 90 residues: Large ribosomal subunit protein bL27 (90 aa).

The segment at 1–21 (MAHKKAGGSSRNGRDSQAKRL) is disordered.

The protein belongs to the bacterial ribosomal protein bL27 family.

The protein is Large ribosomal subunit protein bL27 of Laribacter hongkongensis (strain HLHK9).